The chain runs to 616 residues: Dihydroxy-acid dehydratase (616 aa).

D81 is a binding site for Mg(2+). A [2Fe-2S] cluster-binding site is contributed by C122. The Mg(2+) site is built by D123 and K124. K124 bears the N6-carboxylysine mark. C195 provides a ligand contact to [2Fe-2S] cluster. Residue E491 participates in Mg(2+) binding. S517 (proton acceptor) is an active-site residue.

The protein belongs to the IlvD/Edd family. Homodimer. It depends on [2Fe-2S] cluster as a cofactor. Mg(2+) serves as cofactor.

It carries out the reaction (2R)-2,3-dihydroxy-3-methylbutanoate = 3-methyl-2-oxobutanoate + H2O. The catalysed reaction is (2R,3R)-2,3-dihydroxy-3-methylpentanoate = (S)-3-methyl-2-oxopentanoate + H2O. The protein operates within amino-acid biosynthesis; L-isoleucine biosynthesis; L-isoleucine from 2-oxobutanoate: step 3/4. Its pathway is amino-acid biosynthesis; L-valine biosynthesis; L-valine from pyruvate: step 3/4. Functionally, functions in the biosynthesis of branched-chain amino acids. Catalyzes the dehydration of (2R,3R)-2,3-dihydroxy-3-methylpentanoate (2,3-dihydroxy-3-methylvalerate) into 2-oxo-3-methylpentanoate (2-oxo-3-methylvalerate) and of (2R)-2,3-dihydroxy-3-methylbutanoate (2,3-dihydroxyisovalerate) into 2-oxo-3-methylbutanoate (2-oxoisovalerate), the penultimate precursor to L-isoleucine and L-valine, respectively. The chain is Dihydroxy-acid dehydratase from Pectobacterium carotovorum subsp. carotovorum (strain PC1).